Here is a 235-residue protein sequence, read N- to C-terminus: Protein CIST1 (235 aa).

The first 31 residues, methionine 1–serine 31, serve as a signal peptide directing secretion. Composition is skewed to low complexity over residues aspartate 28–threonine 61 and serine 76–glutamate 110. Residues aspartate 28–threonine 159 are disordered. At serine 32 to glycine 184 the chain is on the extracellular side. The N-linked (GlcNAc...) asparagine glycan is linked to asparagine 45. The segment covering histidine 114–leucine 136 has biased composition (polar residues). A helical transmembrane segment spans residues valine 185–valine 205. Residues arginine 206–proline 235 are Cytoplasmic-facing.

As to expression, highly expressed in large intestine, small intestine, rumen, and kidney tissues.

It is found in the membrane. The protein is Protein CIST1 (CIST1) of Bos taurus (Bovine).